A 277-amino-acid chain; its full sequence is NAD kinase (277 aa).

The active-site Proton acceptor is Asp-55. NAD(+)-binding positions include 55-56 (DG), 131-132 (NE), Arg-157, Asp-159, and 170-175 (TAYNKS).

The protein belongs to the NAD kinase family. A divalent metal cation serves as cofactor.

It is found in the cytoplasm. It catalyses the reaction NAD(+) + ATP = ADP + NADP(+) + H(+). In terms of biological role, involved in the regulation of the intracellular balance of NAD and NADP, and is a key enzyme in the biosynthesis of NADP. Catalyzes specifically the phosphorylation on 2'-hydroxyl of the adenosine moiety of NAD to yield NADP. This chain is NAD kinase, found in Streptococcus mutans serotype c (strain ATCC 700610 / UA159).